The following is an 83-amino-acid chain: Bowman-Birk type proteinase inhibitor (83 aa).

7 disulfides stabilise this stretch: Cys-18-Cys-72, Cys-19-Cys-34, Cys-22-Cys-68, Cys-24-Cys-32, Cys-42-Cys-49, Cys-46-Cys-61, and Cys-51-Cys-59.

The protein belongs to the Bowman-Birk serine protease inhibitor family.

This Phaseolus lunatus (Lima bean) protein is Bowman-Birk type proteinase inhibitor.